Reading from the N-terminus, the 162-residue chain is Peroxiredoxin-2C (162 aa).

The region spanning 4-162 is the Thioredoxin domain; sequence VAVGDTLPDG…SGAEEILKAL (159 aa). Catalysis depends on Cys-51, which acts as the Cysteine sulfenic acid (-SOH) intermediate.

It belongs to the peroxiredoxin family. Prx5 subfamily. Monomer.

It localises to the cytoplasm. The catalysed reaction is [glutaredoxin]-dithiol + a hydroperoxide = [glutaredoxin]-disulfide + an alcohol + H2O. Functionally, reduces hydrogen peroxide and alkyl hydroperoxides with reducing equivalents provided through the thioredoxin or glutaredoxin system. May be involved in intracellular redox signaling. Thiol-specific peroxidase that catalyzes the reduction of hydrogen peroxide and organic hydroperoxides to water and alcohols, respectively. Plays a role in cell protection against oxidative stress by detoxifying peroxides. This chain is Peroxiredoxin-2C (PRXIIC), found in Oryza sativa subsp. japonica (Rice).